Here is a 349-residue protein sequence, read N- to C-terminus: 1-acylglycerol-3-phosphate O-acyltransferase ABHD5 (349 aa).

A2 is modified (N-acetylalanine). In terms of domain architecture, AB hydrolase-1 spans 77-184 (PLVLLHGFGG…LVEPWGFPER (108 aa)). At S122 the chain carries Phosphoserine. The HXXXXD motif motif lies at 327–332 (HYVYAD).

It belongs to the peptidase S33 family. ABHD4/ABHD5 subfamily. Interacts with ADRP, PLIN and PNPLA2. Interacts with PLIN5; promotes interaction with PNPLA2.

It localises to the cytoplasm. It is found in the lipid droplet. It catalyses the reaction a 1-acyl-sn-glycero-3-phosphate + an acyl-CoA = a 1,2-diacyl-sn-glycero-3-phosphate + CoA. The catalysed reaction is 1-(9Z-octadecenoyl)-sn-glycero-3-phosphate + (9Z)-octadecenoyl-CoA = 1,2-di-(9Z-octadecenoyl)-sn-glycero-3-phosphate + CoA. It carries out the reaction 1-(9Z-octadecenoyl)-sn-glycero-3-phosphate + hexadecanoyl-CoA = 1-(9Z)-octadecenoyl-2-hexadecanoyl-sn-glycero-3-phosphate + CoA. The enzyme catalyses 1-(9Z-octadecenoyl)-sn-glycero-3-phosphate + octadecanoyl-CoA = 1-(9Z-octadecenoyl)-2-octadecanoyl-sn-glycero-3-phosphate + CoA. It catalyses the reaction 1-(9Z-octadecenoyl)-sn-glycero-3-phosphate + (5Z,8Z,11Z,14Z)-eicosatetraenoyl-CoA = 1-(9Z)-octadecenoyl-2-(5Z,8Z,11Z,14Z)-eicosatetraenoyl-sn-glycero-3-phosphate + CoA. The catalysed reaction is eicosanoyl-CoA + 1-(9Z-octadecenoyl)-sn-glycero-3-phosphate = 1-(9Z)-octadecenoyl-2-eicosanoyl-sn-glycero-3-phosphate + CoA. It carries out the reaction 1-hexadecanoyl-sn-glycero-3-phosphate + (9Z)-octadecenoyl-CoA = 1-hexadecanoyl-2-(9Z-octadecenoyl)-sn-glycero-3-phosphate + CoA. The enzyme catalyses 1-octadecanoyl-sn-glycero-3-phosphate + (9Z)-octadecenoyl-CoA = 1-octadecanoyl-2-(9Z-octadecenoyl)-sn-glycero-3-phosphate + CoA. It catalyses the reaction 1-(5Z,8Z,11Z,14Z-eicosatetraenoyl)-sn-glycero-3-phosphate + (9Z)-octadecenoyl-CoA = 1-(5Z,8Z,11Z,14Z)-eicosatetraenoyl-2-(9Z)-octadecenoyl-sn-glycero-3-phosphate + CoA. With respect to regulation, acyltransferase activity is inhibited by detergents such as Triton X-100 and 3-[(3-cholamidopropyl)dimethylammonio]-1-propanesulfonate (CHAPS). Acyltransferase activity is inhibited by the presence of magnesium and calcium. Coenzyme A-dependent lysophosphatidic acid acyltransferase that catalyzes the transfer of an acyl group on a lysophosphatidic acid. Functions preferentially with 1-oleoyl-lysophosphatidic acid followed by 1-palmitoyl-lysophosphatidic acid, 1-stearoyl-lysophosphatidic acid and 1-arachidonoyl-lysophosphatidic acid as lipid acceptor. Functions preferentially with arachidonoyl-CoA followed by oleoyl-CoA as acyl group donors. Functions in phosphatidic acid biosynthesis. May regulate the cellular storage of triacylglycerol through activation of the phospholipase PNPLA2. Involved in keratinocyte differentiation. Regulates lipid droplet fusion. This is 1-acylglycerol-3-phosphate O-acyltransferase ABHD5 from Pongo abelii (Sumatran orangutan).